We begin with the raw amino-acid sequence, 271 residues long: Phospholipid scramblase family member 5 (271 aa).

Residues methionine 1–arginine 10 show a composition bias toward polar residues. The disordered stretch occupies residues methionine 1–proline 33. The interval methionine 1–proline 45 is proline-rich domain (PRD).

Belongs to the phospholipid scramblase family.

The polypeptide is Phospholipid scramblase family member 5 (PLSCR5) (Homo sapiens (Human)).